A 239-amino-acid chain; its full sequence is 1-(5-phosphoribosyl)-5-[(5-phosphoribosylamino)methylideneamino] imidazole-4-carboxamide isomerase (239 aa).

Aspartate 8 functions as the Proton acceptor in the catalytic mechanism. Residue aspartate 129 is the Proton donor of the active site.

The protein belongs to the HisA/HisF family.

It localises to the cytoplasm. It catalyses the reaction 1-(5-phospho-beta-D-ribosyl)-5-[(5-phospho-beta-D-ribosylamino)methylideneamino]imidazole-4-carboxamide = 5-[(5-phospho-1-deoxy-D-ribulos-1-ylimino)methylamino]-1-(5-phospho-beta-D-ribosyl)imidazole-4-carboxamide. It participates in amino-acid biosynthesis; L-histidine biosynthesis; L-histidine from 5-phospho-alpha-D-ribose 1-diphosphate: step 4/9. The protein is 1-(5-phosphoribosyl)-5-[(5-phosphoribosylamino)methylideneamino] imidazole-4-carboxamide isomerase of Bacillus cereus (strain AH187).